A 475-amino-acid polypeptide reads, in one-letter code: GDP-fucose protein O-fucosyltransferase 3 (475 aa).

Topologically, residues 1–8 (MVRMRRKR) are cytoplasmic. The helical; Signal-anchor for type II membrane protein transmembrane segment at 9 to 29 (LWASCICFAAFFFLLVTLQVI) threads the bilayer. Over 30–475 (TELGNSENKA…QEFWMLVFKQ (446 aa)) the chain is Lumenal. N-linked (GlcNAc...) asparagine glycosylation is found at asparagine 107, asparagine 165, and asparagine 315. A disulfide bond links cysteine 386 and cysteine 389. N-linked (GlcNAc...) asparagine glycosylation occurs at asparagine 462.

This sequence belongs to the glycosyltransferase 10 family.

Its subcellular location is the endoplasmic reticulum membrane. It carries out the reaction L-threonyl-[protein] + GDP-beta-L-fucose = 3-O-(alpha-L-fucosyl)-L-threonyl-[protein] + GDP + H(+). It catalyses the reaction L-seryl-[protein] + GDP-beta-L-fucose = 3-O-(alpha-L-fucosyl)-L-seryl-[protein] + GDP + H(+). Its pathway is protein modification; protein glycosylation. In terms of biological role, protein O-fucosyltransferase that specifically catalyzes O-fucosylation of serine or threonine residues in EMI domains of target proteins. Attaches fucose through an O-glycosidic linkage. O-fucosylation of EMI domain-containing proteins may be required for facilitating protein folding and secretion. This chain is GDP-fucose protein O-fucosyltransferase 3 (FUT10), found in Gallus gallus (Chicken).